Reading from the N-terminus, the 496-residue chain is Glycylpeptide N-tetradecanoyltransferase 1 (496 aa).

Residues 1 to 82 (MADESETAVK…SAQDQPVKMN (82 aa)) form a disordered region. Phosphoserine is present on residues serine 31 and serine 47. Over residues 55-66 (KKKKKKQKKKKE) the composition is skewed to basic residues. Position 83 is a phosphoserine (serine 83). Tetradecanoyl-CoA is bound by residues glutamine 118, phenylalanine 119, tryptophan 120, phenylalanine 247, leucine 248, cysteine 249, valine 250, serine 256, arginine 258, valine 259, and alanine 260.

The protein belongs to the NMT family.

The protein resides in the cytoplasm. Its subcellular location is the cytosol. It localises to the membrane. The enzyme catalyses N-terminal glycyl-[protein] + tetradecanoyl-CoA = N-tetradecanoylglycyl-[protein] + CoA + H(+). It catalyses the reaction N-terminal glycyl-L-lysyl-[protein] + tetradecanoyl-CoA = N-terminal glycyl-(N(6)-tetradecanoyl)-L-lysyl-[protein] + CoA + H(+). Its function is as follows. Adds a myristoyl group to the N-terminal glycine residue of certain cellular and viral proteins. Also able to mediate N-terminal lysine myristoylation of proteins: catalyzes myristoylation of ARF6 on both 'Gly-2' and 'Lys-3'. Lysine myristoylation is required to maintain ARF6 on membranes during the GTPase cycle. The polypeptide is Glycylpeptide N-tetradecanoyltransferase 1 (NMT1) (Pongo abelii (Sumatran orangutan)).